The primary structure comprises 161 residues: uncharacterized protein (161 aa).

Belongs to the mimivirus L761/L899 family.

The protein localises to the virion. This is an uncharacterized protein from Acanthamoeba polyphaga (Amoeba).